Here is a 259-residue protein sequence, read N- to C-terminus: 1,2-dihydroxy-1,2-dihydronaphthalene dehydrogenase (259 aa).

An NAD(+)-binding site is contributed by S8–S32. Residue S140 coordinates substrate. Y153 (proton acceptor) is an active-site residue.

This sequence belongs to the short-chain dehydrogenases/reductases (SDR) family.

The catalysed reaction is (1R,2S)-1,2-dihydronaphthalene-1,2-diol + NAD(+) = naphthalene-1,2-diol + NADH + H(+). It carries out the reaction cis-1,2-dihydroxy-1,2-dihydrodibenzothiophene + NAD(+) = 1,2-dihydroxydibenzothiophene + NADH + H(+). It functions in the pathway aromatic compound metabolism; naphthalene degradation. In terms of biological role, catalyzes the oxidation of naphthalene dihydrodiol into 1,2-dihydroxynaphthalene. The protein is 1,2-dihydroxy-1,2-dihydronaphthalene dehydrogenase (nahB) of Pseudomonas putida (Arthrobacter siderocapsulatus).